The sequence spans 392 residues: Putative non-inhibitory serpin-10 (392 aa).

Residues 333–357 are RCL; sequence GTTAVEATYSCCSPTYSGPESPKPR.

This sequence belongs to the serpin family.

This is Putative non-inhibitory serpin-10 from Oryza sativa subsp. japonica (Rice).